We begin with the raw amino-acid sequence, 191 residues long: Protein Ves (191 aa).

It belongs to the Ves family.

This Citrobacter koseri (strain ATCC BAA-895 / CDC 4225-83 / SGSC4696) protein is Protein Ves.